The following is a 500-amino-acid chain: Maturase K (500 aa).

It belongs to the intron maturase 2 family. MatK subfamily.

The protein resides in the plastid. The protein localises to the chloroplast. Its function is as follows. Usually encoded in the trnK tRNA gene intron. Probably assists in splicing its own and other chloroplast group II introns. This Brasenia schreberi (Water shield) protein is Maturase K.